Here is a 243-residue protein sequence, read N- to C-terminus: Triosephosphate isomerase (243 aa).

Substrate is bound at residue 9 to 11; sequence NWK. H96 acts as the Electrophile in catalysis. Catalysis depends on E165, which acts as the Proton acceptor. Substrate contacts are provided by residues G171, S204, and 225–226; that span reads GG.

It belongs to the triosephosphate isomerase family. As to quaternary structure, homodimer.

It localises to the cytoplasm. It catalyses the reaction D-glyceraldehyde 3-phosphate = dihydroxyacetone phosphate. Its pathway is carbohydrate biosynthesis; gluconeogenesis. It participates in carbohydrate degradation; glycolysis; D-glyceraldehyde 3-phosphate from glycerone phosphate: step 1/1. Involved in the gluconeogenesis. Catalyzes stereospecifically the conversion of dihydroxyacetone phosphate (DHAP) to D-glyceraldehyde-3-phosphate (G3P). This is Triosephosphate isomerase from Synechococcus sp. (strain CC9902).